Reading from the N-terminus, the 373-residue chain is Queuine tRNA-ribosyltransferase (373 aa).

Catalysis depends on D90, which acts as the Proton acceptor. Substrate-binding positions include 90-94, D144, Q193, and G220; that span reads DSGGF. The RNA binding stretch occupies residues 251 to 257; the sequence is GVGTPED. Catalysis depends on D270, which acts as the Nucleophile. The segment at 275–279 is RNA binding; important for wobble base 34 recognition; sequence TRNAR. C308, C310, C313, and H339 together coordinate Zn(2+).

The protein belongs to the queuine tRNA-ribosyltransferase family. Homodimer. Within each dimer, one monomer is responsible for RNA recognition and catalysis, while the other monomer binds to the replacement base PreQ1. Requires Zn(2+) as cofactor.

The enzyme catalyses 7-aminomethyl-7-carbaguanine + guanosine(34) in tRNA = 7-aminomethyl-7-carbaguanosine(34) in tRNA + guanine. It functions in the pathway tRNA modification; tRNA-queuosine biosynthesis. Its function is as follows. Catalyzes the base-exchange of a guanine (G) residue with the queuine precursor 7-aminomethyl-7-deazaguanine (PreQ1) at position 34 (anticodon wobble position) in tRNAs with GU(N) anticodons (tRNA-Asp, -Asn, -His and -Tyr). Catalysis occurs through a double-displacement mechanism. The nucleophile active site attacks the C1' of nucleotide 34 to detach the guanine base from the RNA, forming a covalent enzyme-RNA intermediate. The proton acceptor active site deprotonates the incoming PreQ1, allowing a nucleophilic attack on the C1' of the ribose to form the product. After dissociation, two additional enzymatic reactions on the tRNA convert PreQ1 to queuine (Q), resulting in the hypermodified nucleoside queuosine (7-(((4,5-cis-dihydroxy-2-cyclopenten-1-yl)amino)methyl)-7-deazaguanosine). This is Queuine tRNA-ribosyltransferase from Campylobacter jejuni subsp. doylei (strain ATCC BAA-1458 / RM4099 / 269.97).